We begin with the raw amino-acid sequence, 320 residues long: Cytochrome f (320 aa).

Residues 1 to 35 (MQTRNTFSWIREEITRSISVSLMIYIITWASISGA) form the signal peptide. Heme is bound by residues Tyr36, Cys56, Cys59, and His60. A helical transmembrane segment spans residues 286 to 306 (VQGLLFFLGSVVLAQIFLVLK).

This sequence belongs to the cytochrome f family. The 4 large subunits of the cytochrome b6-f complex are cytochrome b6, subunit IV (17 kDa polypeptide, petD), cytochrome f and the Rieske protein, while the 4 small subunits are PetG, PetL, PetM and PetN. The complex functions as a dimer. The cofactor is heme.

It localises to the plastid. The protein localises to the chloroplast thylakoid membrane. Its function is as follows. Component of the cytochrome b6-f complex, which mediates electron transfer between photosystem II (PSII) and photosystem I (PSI), cyclic electron flow around PSI, and state transitions. The protein is Cytochrome f of Capsella bursa-pastoris (Shepherd's purse).